The chain runs to 74 residues: M-myrmeciitoxin-Mb1a (74 aa).

The N-terminal stretch at 1-26 (MKLSCLLLTLAIIVVLTIVHAPNVEA) is a signal peptide. Positions 27–50 (KALADPESDAVGFADAVGEADPNA) are excised as a propeptide. At Gln-73 the chain carries Glutamine amide.

This sequence belongs to the formicidae venom precursor-01 superfamily. Ant pilosulin family. As to expression, expressed by the venom gland.

Its subcellular location is the secreted. Functionally, shows moderate activity against E.coli and S.aureus (MIC&lt;25 uM), slight activity against B.subtilis (MIC&lt;50 uM), and no activity against L.garvieae, P.aeruginosa, C.albicans, and S.cerevisiae. Has no hemolytic nor cytolytic activity. Causes an IgE-independent histamine release. The protein is M-myrmeciitoxin-Mb1a of Myrmecia banksi (Jack jumper ant).